The following is a 658-amino-acid chain: tRNA 5-methylaminomethyl-2-thiouridine biosynthesis bifunctional protein MnmC (658 aa).

The interval 1–236 (MIPELPHAQL…KWEVLRGEFL (236 aa)) is tRNA (mnm(5)s(2)U34)-methyltransferase. An FAD-dependent cmnm(5)s(2)U34 oxidoreductase region spans residues 265 to 658 (IGGGLAGCAS…ALRRLIRGKA (394 aa)).

The protein in the N-terminal section; belongs to the methyltransferase superfamily. tRNA (mnm(5)s(2)U34)-methyltransferase family. This sequence in the C-terminal section; belongs to the DAO family. FAD serves as cofactor.

The protein resides in the cytoplasm. It carries out the reaction 5-aminomethyl-2-thiouridine(34) in tRNA + S-adenosyl-L-methionine = 5-methylaminomethyl-2-thiouridine(34) in tRNA + S-adenosyl-L-homocysteine + H(+). Functionally, catalyzes the last two steps in the biosynthesis of 5-methylaminomethyl-2-thiouridine (mnm(5)s(2)U) at the wobble position (U34) in tRNA. Catalyzes the FAD-dependent demodification of cmnm(5)s(2)U34 to nm(5)s(2)U34, followed by the transfer of a methyl group from S-adenosyl-L-methionine to nm(5)s(2)U34, to form mnm(5)s(2)U34. This Pseudomonas fluorescens (strain ATCC BAA-477 / NRRL B-23932 / Pf-5) protein is tRNA 5-methylaminomethyl-2-thiouridine biosynthesis bifunctional protein MnmC.